The sequence spans 442 residues: Histidine--tRNA ligase (442 aa).

The protein belongs to the class-II aminoacyl-tRNA synthetase family. As to quaternary structure, homodimer.

It is found in the cytoplasm. It catalyses the reaction tRNA(His) + L-histidine + ATP = L-histidyl-tRNA(His) + AMP + diphosphate + H(+). The sequence is that of Histidine--tRNA ligase from Helicobacter hepaticus (strain ATCC 51449 / 3B1).